A 431-amino-acid polypeptide reads, in one-letter code: Serine--tRNA ligase (431 aa).

Position 238–240 (238–240 (TAE)) interacts with L-serine. 269 to 271 (RSE) provides a ligand contact to ATP. An L-serine-binding site is contributed by glutamate 292. 356–359 (EISS) is a binding site for ATP. Serine 391 contributes to the L-serine binding site.

It belongs to the class-II aminoacyl-tRNA synthetase family. Type-1 seryl-tRNA synthetase subfamily. In terms of assembly, homodimer. The tRNA molecule binds across the dimer.

Its subcellular location is the cytoplasm. The catalysed reaction is tRNA(Ser) + L-serine + ATP = L-seryl-tRNA(Ser) + AMP + diphosphate + H(+). The enzyme catalyses tRNA(Sec) + L-serine + ATP = L-seryl-tRNA(Sec) + AMP + diphosphate + H(+). It functions in the pathway aminoacyl-tRNA biosynthesis; selenocysteinyl-tRNA(Sec) biosynthesis; L-seryl-tRNA(Sec) from L-serine and tRNA(Sec): step 1/1. In terms of biological role, catalyzes the attachment of serine to tRNA(Ser). Is also able to aminoacylate tRNA(Sec) with serine, to form the misacylated tRNA L-seryl-tRNA(Sec), which will be further converted into selenocysteinyl-tRNA(Sec). This chain is Serine--tRNA ligase, found in Bdellovibrio bacteriovorus (strain ATCC 15356 / DSM 50701 / NCIMB 9529 / HD100).